The sequence spans 474 residues: Glutathione synthetase (474 aa).

Ala2 is subject to N-acetylalanine. Residue Arg125 participates in substrate binding. Position 144 (Glu144) interacts with ATP. Residues Glu144 and Asn146 each contribute to the Mg(2+) site. Substrate is bound by residues 148-151 (ISAS), 214-216 (ERN), Gln220, and 267-270 (RDGY). Residues Lys305, 364–373 (KPQREGGGNN), Tyr375, and 398–401 (MEKI) each bind ATP. Residue Glu368 coordinates Mg(2+). Ser415 is modified (phosphoserine). Glu425 is an ATP binding site. Arg450 provides a ligand contact to substrate. Residues Lys452 and Asp458 each contribute to the ATP site. 461–462 (VA) serves as a coordination point for substrate.

It belongs to the eukaryotic GSH synthase family. In terms of assembly, homodimer. Mg(2+) serves as cofactor.

It carries out the reaction gamma-L-glutamyl-L-cysteine + glycine + ATP = glutathione + ADP + phosphate + H(+). The catalysed reaction is gamma-L-glutamyl-(2S)-2-aminobutanoate + glycine + ATP = ophthalmate + ADP + phosphate + H(+). It functions in the pathway sulfur metabolism; glutathione biosynthesis; glutathione from L-cysteine and L-glutamate: step 2/2. Its function is as follows. Catalyzes the production of glutathione from gamma-glutamylcysteine and glycine in an ATP-dependent manner. Glutathione (gamma-glutamylcysteinylglycine, GSH) is the most abundant intracellular thiol in living aerobic cells and is required for numerous processes including the protection of cells against oxidative damage, amino acid transport, the detoxification of foreign compounds, the maintenance of protein sulfhydryl groups in a reduced state and acts as a cofactor for a number of enzymes. Participates in ophthalmate biosynthesis in hepatocytes. The protein is Glutathione synthetase of Rattus norvegicus (Rat).